The primary structure comprises 716 residues: Calpain-1 catalytic subunit (716 aa).

Positions 55-354 (LFRDEAFPPV…FTRLEICNLT (300 aa)) constitute a Calpain catalytic domain. Residues Gln109 and Asp114 each contribute to the Ca(2+) site. Active-site residues include Cys115, His272, and Asn296. 2 residues coordinate Ca(2+): Asp318 and Glu323. At Thr354 the chain carries Phosphothreonine. Residues 355–528 (PDALKSQRFR…KSAGTQELDD (174 aa)) are domain III. Positions 529–544 (QVQANLPDEQVLSEEE) are linker. EF-hand domains are found at residues 543–578 (EEID…IISK), 587–620 (FSLE…NRIR), 617–652 (NRIR…AGFK), and 682–716 (VRLE…TMFA). The interval 545-715 (IDENFKSLFR…LFKWLQLTMF (171 aa)) is domain IV. 10 residues coordinate Ca(2+): Asp600, Asp602, Asn604, Lys606, Glu611, Asp630, Asp632, Ser634, Ser636, and Glu641.

This sequence belongs to the peptidase C2 family. In terms of assembly, forms a heterodimer with a small (regulatory) subunit CAPNS1. Ca(2+) is required as a cofactor. Post-translationally, undergoes calcium-induced successive autoproteolytic cleavages that generate a membrane-bound 78 kDa active form and an intracellular 75 kDa active form. Calpastatin reduces with high efficiency the transition from 78 kDa to 75 kDa calpain forms.

It is found in the cytoplasm. The protein localises to the cell membrane. The catalysed reaction is Broad endopeptidase specificity.. Its activity is regulated as follows. Activated by micromolar concentrations of calcium and inhibited by calpastatin. Functionally, calcium-regulated non-lysosomal thiol-protease which catalyzes limited proteolysis of substrates involved in cytoskeletal remodeling and signal transduction. Proteolytically cleaves CTBP1. Cleaves and activates caspase-7 (CASP7). The polypeptide is Calpain-1 catalytic subunit (Bos taurus (Bovine)).